A 403-amino-acid chain; its full sequence is ATP phosphoribosyltransferase regulatory subunit (403 aa).

It belongs to the class-II aminoacyl-tRNA synthetase family. HisZ subfamily. Heteromultimer composed of HisG and HisZ subunits.

It is found in the cytoplasm. The protein operates within amino-acid biosynthesis; L-histidine biosynthesis; L-histidine from 5-phospho-alpha-D-ribose 1-diphosphate: step 1/9. Functionally, required for the first step of histidine biosynthesis. May allow the feedback regulation of ATP phosphoribosyltransferase activity by histidine. In Nostoc punctiforme (strain ATCC 29133 / PCC 73102), this protein is ATP phosphoribosyltransferase regulatory subunit.